The chain runs to 179 residues: Large ribosomal subunit protein uL6 (179 aa).

The protein belongs to the universal ribosomal protein uL6 family. As to quaternary structure, part of the 50S ribosomal subunit.

Functionally, this protein binds to the 23S rRNA, and is important in its secondary structure. It is located near the subunit interface in the base of the L7/L12 stalk, and near the tRNA binding site of the peptidyltransferase center. The chain is Large ribosomal subunit protein uL6 from Geotalea uraniireducens (strain Rf4) (Geobacter uraniireducens).